Here is a 351-residue protein sequence, read N- to C-terminus: uncharacterized protein (351 aa).

Positions 1–32 are cleaved as a signal peptide; the sequence is MKNKKRVFIASSLSCVLLLLSAANTEANSANK. Positions 26 to 74 are disordered; the sequence is EANSANKDSQDQTKKEHVDKAQQKEKRNVNDKDKNTPGPDDIGKNGKVT. A compositionally biased stretch (basic and acidic residues) spans 33 to 60; sequence DSQDQTKKEHVDKAQQKEKRNVNDKDKN.

The protein belongs to the aerolysin family.

This is an uncharacterized protein from Staphylococcus aureus (strain MRSA252).